Consider the following 256-residue polypeptide: Thiazole synthase (256 aa).

The Schiff-base intermediate with DXP role is filled by lysine 96. 1-deoxy-D-xylulose 5-phosphate contacts are provided by residues glycine 157, 184-185, and 206-207; these read AG and NT.

It belongs to the ThiG family. Homotetramer. Forms heterodimers with either ThiH or ThiS.

It localises to the cytoplasm. It carries out the reaction [ThiS sulfur-carrier protein]-C-terminal-Gly-aminoethanethioate + 2-iminoacetate + 1-deoxy-D-xylulose 5-phosphate = [ThiS sulfur-carrier protein]-C-terminal Gly-Gly + 2-[(2R,5Z)-2-carboxy-4-methylthiazol-5(2H)-ylidene]ethyl phosphate + 2 H2O + H(+). The protein operates within cofactor biosynthesis; thiamine diphosphate biosynthesis. Functionally, catalyzes the rearrangement of 1-deoxy-D-xylulose 5-phosphate (DXP) to produce the thiazole phosphate moiety of thiamine. Sulfur is provided by the thiocarboxylate moiety of the carrier protein ThiS. In vitro, sulfur can be provided by H(2)S. This is Thiazole synthase from Roseobacter denitrificans (strain ATCC 33942 / OCh 114) (Erythrobacter sp. (strain OCh 114)).